The primary structure comprises 229 residues: CRISPR pre-crRNA endoribonuclease Cas5d (229 aa).

It belongs to the CRISPR-associated protein Cas5 family. Subtype I-C/Dvulg subfamily. Does not require a metal cofactor. serves as cofactor.

Its function is as follows. CRISPR (clustered regularly interspaced short palindromic repeat) is an adaptive immune system that provides protection against mobile genetic elements (viruses, transposable elements and conjugative plasmids). CRISPR clusters contain spacers, sequences complementary to antecedent mobile elements, and target invading nucleic acids. CRISPR clusters are transcribed and processed into CRISPR RNA (crRNA). This protein is a sequence-specific endonuclease that cleaves pre-crRNA into mature crRNA, possibly by an intramolecular attack of the 2'-hydroxyl group of G26 on the scissile phosphodiester, cutting the precursor 3' to G26 residue yielding 5'-hydroxyl and 2' and/or 3' ends lacking a hydroxyl group (perhaps a 2'/3' cyclic phosphodiester). Requires between 4 and 8 nt downstream of the cleavage site for both binding and cleavage of pre-crRNA. Substitution with dG at this position abolishes cleavage but not RNA binding. Does not cleave pre-crRNA associated with the M.succiniciproducens strain MBEL55E Cas5 protein (AC Q65TW5) CRISPR locus. This Thermus thermophilus (strain ATCC BAA-163 / DSM 7039 / HB27) protein is CRISPR pre-crRNA endoribonuclease Cas5d.